A 460-amino-acid polypeptide reads, in one-letter code: Putative movement protein (460 aa).

Disordered stretches follow at residues 267–314 (SGSK…SDFE) and 349–460 (RQNQ…PSGL). The segment covering 368-379 (RKSKGISGRRKQ) has biased composition (basic residues).

This sequence belongs to the tobamoviruses movement protein family.

In terms of biological role, suppressor of viral-induced RNA silencing. The polypeptide is Putative movement protein (Crataegus (hawthorn)).